A 35-amino-acid polypeptide reads, in one-letter code: Photosystem II reaction center protein Psb30 (35 aa).

A helical transmembrane segment spans residues 7–27; the sequence is LIANFGALALITLAGPAVIFI.

This sequence belongs to the Psb30/Ycf12 family. In terms of assembly, PSII is composed of 1 copy each of membrane proteins PsbA, PsbB, PsbC, PsbD, PsbE, PsbF, PsbH, PsbI, PsbJ, PsbK, PsbL, PsbM, PsbT, PsbX, PsbY, PsbZ, Psb30/Ycf12, peripheral proteins PsbO, CyanoQ (PsbQ), PsbU, PsbV and a large number of cofactors. It forms dimeric complexes.

It localises to the cellular thylakoid membrane. A core subunit of photosystem II (PSII), probably helps stabilize the reaction center. The chain is Photosystem II reaction center protein Psb30 from Synechococcus sp. (strain CC9311).